The primary structure comprises 548 residues: Polynucleotide 5'-hydroxyl-kinase nol-9 (548 aa).

Residue 186 to 193 (GHKGAGKS) coordinates ATP.

It belongs to the Clp1 family. NOL9/GRC3 subfamily.

The protein localises to the nucleus. It is found in the nucleolus. In terms of biological role, polynucleotide 5'-kinase involved in rRNA processing. This is Polynucleotide 5'-hydroxyl-kinase nol-9 (nol-9) from Caenorhabditis briggsae.